The following is a 910-amino-acid chain: Seizure 6-like protein 2 (910 aa).

The N-terminal stretch at 1 to 27 (MGTPRAQHPPPPQLLFLILLSCPWIQG) is a signal peptide. Over 28–844 (LPLKEEEILP…DPSRQLEGGN (817 aa)) the chain is Extracellular. Residues 41-48 (SETPTVAS) form an O-glycosylated at one site region. The disordered stretch occupies residues 65-152 (EMGYLPGSDR…PLGPEGGEEE (88 aa)). The span at 123-145 (LTPPPGTTAPPPPSPASPGPPLG) shows a compositional bias: pro residues. Cys-173 and Cys-202 are oxidised to a cystine. The 114-residue stretch at 173–286 (CNNNISEGEG…GGFRIHYQAY (114 aa)) folds into the CUB 1 domain. N-linked (GlcNAc...) asparagine glycosylation is found at Asn-176, Asn-222, and Asn-247. In terms of domain architecture, Sushi 1 spans 288 to 347 (LSCGFPPRPAHGDVSVTDLHPGGTATFHCDSGYQLQGEETLICLNGTRPSWNGETPSCMA). 6 cysteine pairs are disulfide-bonded: Cys-290–Cys-330, Cys-316–Cys-345, Cys-349–Cys-376, Cys-464–Cys-508, Cys-491–Cys-523, and Cys-527–Cys-553. Residues Asn-332, Asn-355, Asn-373, Asn-473, and Asn-517 are each glycosylated (N-linked (GlcNAc...) asparagine). Residues 349 to 459 (CGGTIHNATL…LLLSLRFEAF (111 aa)) enclose the CUB 2 domain. Residues 462 to 525 (DRCFAPFLAH…WNDTEPACKA (64 aa)) form the Sushi 2 domain. The CUB 3 domain occupies 527-638 (CGGELSEPAG…QGFVLHFKEV (112 aa)). Residue Asn-641 is glycosylated (N-linked (GlcNAc...) asparagine). Sushi domains lie at 642–701 (DTCP…ACQK), 703–766 (MTCA…KCAL), and 769–830 (EPCL…LCKV). 6 disulfide bridges follow: Cys-644-Cys-686, Cys-672-Cys-699, Cys-705-Cys-747, Cys-733-Cys-764, Cys-771-Cys-813, and Cys-799-Cys-828. Residues 845–865 (LALAILLPLGLVIVLGSGVYI) form a helical membrane-spanning segment. Topologically, residues 866–910 (YYTKLQGKSLFGFSGSHSYSPITVESDFSNPLYEAGDTREYEVSI) are cytoplasmic.

This sequence belongs to the SEZ6 family. In terms of processing, O-glycosylated with core 1 or possibly core 8 glycans.

It is found in the cell membrane. The protein localises to the endoplasmic reticulum membrane. May contribute to specialized endoplasmic reticulum functions in neurons. The chain is Seizure 6-like protein 2 (SEZ6L2) from Homo sapiens (Human).